The sequence spans 198 residues: Thymidine kinase (198 aa).

ATP-binding positions include 15–22 (GCMFSGKT) and 87–90 (DEAQ). The active-site Proton acceptor is Glu-88. The Zn(2+) site is built by Cys-144, Cys-147, Cys-182, and His-185.

The protein belongs to the thymidine kinase family. As to quaternary structure, homotetramer.

The protein resides in the cytoplasm. It catalyses the reaction thymidine + ATP = dTMP + ADP + H(+). This is Thymidine kinase from Coprothermobacter proteolyticus (strain ATCC 35245 / DSM 5265 / OCM 4 / BT).